A 278-amino-acid chain; its full sequence is Checkpoint protein HUS1B (278 aa).

It belongs to the HUS1 family. Interacts with RAD1 and RAD9B. Expressed strongly in testis, less in spleen, thymus, prostate, colon and leukocytes.

The polypeptide is Checkpoint protein HUS1B (HUS1B) (Homo sapiens (Human)).